Consider the following 195-residue polypeptide: Holliday junction branch migration complex subunit RuvA (195 aa).

The domain I stretch occupies residues 1-64; sequence MIASIRGVIQ…EDALTLYGFS (64 aa). The domain II stretch occupies residues 65–139; it reads DNAQRSLFEQ…GKIDFRQLAA (75 aa). The segment at 139 to 143 is flexible linker; it reads ASGST. The tract at residues 144 to 195 is domain III; sequence SVSALDRELSEILVSLGYSAAEAAAAIASLPSDAPPTLEERLRLALRYFGSA.

The protein belongs to the RuvA family. In terms of assembly, homotetramer. Forms an RuvA(8)-RuvB(12)-Holliday junction (HJ) complex. HJ DNA is sandwiched between 2 RuvA tetramers; dsDNA enters through RuvA and exits via RuvB. An RuvB hexamer assembles on each DNA strand where it exits the tetramer. Each RuvB hexamer is contacted by two RuvA subunits (via domain III) on 2 adjacent RuvB subunits; this complex drives branch migration. In the full resolvosome a probable DNA-RuvA(4)-RuvB(12)-RuvC(2) complex forms which resolves the HJ.

Its subcellular location is the cytoplasm. In terms of biological role, the RuvA-RuvB-RuvC complex processes Holliday junction (HJ) DNA during genetic recombination and DNA repair, while the RuvA-RuvB complex plays an important role in the rescue of blocked DNA replication forks via replication fork reversal (RFR). RuvA specifically binds to HJ cruciform DNA, conferring on it an open structure. The RuvB hexamer acts as an ATP-dependent pump, pulling dsDNA into and through the RuvAB complex. HJ branch migration allows RuvC to scan DNA until it finds its consensus sequence, where it cleaves and resolves the cruciform DNA. In Chloroflexus aggregans (strain MD-66 / DSM 9485), this protein is Holliday junction branch migration complex subunit RuvA.